Reading from the N-terminus, the 273-residue chain is Undecaprenyl-diphosphatase (273 aa).

7 helical membrane passes run 48–68 (AANT…VVVF), 89–109 (LTLL…VLFE), 116–136 (LFST…MIVA), 152–172 (ITYK…WPGF), 193–213 (ADFT…LSLL), 222–242 (ADIP…LLAI), and 252–272 (IRLV…YFLY).

This sequence belongs to the UppP family.

The protein resides in the cell membrane. It catalyses the reaction di-trans,octa-cis-undecaprenyl diphosphate + H2O = di-trans,octa-cis-undecaprenyl phosphate + phosphate + H(+). Functionally, catalyzes the dephosphorylation of undecaprenyl diphosphate (UPP). Confers resistance to bacitracin. The protein is Undecaprenyl-diphosphatase of Geobacillus thermodenitrificans (strain NG80-2).